The primary structure comprises 367 residues: Ribosomal RNA large subunit methyltransferase M (367 aa).

Residues Ser188, 221–224, Asp240, Asp260, and Asp277 contribute to the S-adenosyl-L-methionine site; that span reads CPGG. Lys306 acts as the Proton acceptor in catalysis.

The protein belongs to the class I-like SAM-binding methyltransferase superfamily. RNA methyltransferase RlmE family. RlmM subfamily. Monomer.

The protein resides in the cytoplasm. The catalysed reaction is cytidine(2498) in 23S rRNA + S-adenosyl-L-methionine = 2'-O-methylcytidine(2498) in 23S rRNA + S-adenosyl-L-homocysteine + H(+). Functionally, catalyzes the 2'-O-methylation at nucleotide C2498 in 23S rRNA. This chain is Ribosomal RNA large subunit methyltransferase M, found in Serratia proteamaculans (strain 568).